Reading from the N-terminus, the 70-residue chain is Putative membrane protein insertion efficiency factor (70 aa).

Belongs to the UPF0161 family.

It localises to the cell inner membrane. Could be involved in insertion of integral membrane proteins into the membrane. The polypeptide is Putative membrane protein insertion efficiency factor (Rhizorhabdus wittichii (strain DSM 6014 / CCUG 31198 / JCM 15750 / NBRC 105917 / EY 4224 / RW1) (Sphingomonas wittichii)).